The chain runs to 189 residues: Ribosome maturation factor RimM (189 aa).

A PRC barrel domain is found at 96 to 169 (EDEFYYADLE…TLLIDPLAAG (74 aa)).

The protein belongs to the RimM family. As to quaternary structure, binds ribosomal protein uS19.

It localises to the cytoplasm. In terms of biological role, an accessory protein needed during the final step in the assembly of 30S ribosomal subunit, possibly for assembly of the head region. Essential for efficient processing of 16S rRNA. May be needed both before and after RbfA during the maturation of 16S rRNA. It has affinity for free ribosomal 30S subunits but not for 70S ribosomes. In Rhizobium johnstonii (strain DSM 114642 / LMG 32736 / 3841) (Rhizobium leguminosarum bv. viciae), this protein is Ribosome maturation factor RimM.